Here is a 292-residue protein sequence, read N- to C-terminus: Oxidative stress-responsive serine-rich protein 1 (292 aa).

The segment at 27-175 is disordered; it reads SIASLSVGEG…SSDATQVSQA (149 aa). Residues 65–83 show a composition bias toward basic residues; sequence STRKSSRGVVRTQRRRRSK. Thr-143 and Thr-233 each carry phosphothreonine.

In Pongo abelii (Sumatran orangutan), this protein is Oxidative stress-responsive serine-rich protein 1 (OSER1).